The following is a 177-amino-acid chain: Small ribosomal subunit protein uS5 (177 aa).

An S5 DRBM domain is found at 21 to 84 (LLDRVVKIKR…KQASRSMIHV (64 aa)).

It belongs to the universal ribosomal protein uS5 family. As to quaternary structure, part of the 30S ribosomal subunit. Contacts proteins S4 and S8.

Functionally, with S4 and S12 plays an important role in translational accuracy. Located at the back of the 30S subunit body where it stabilizes the conformation of the head with respect to the body. The protein is Small ribosomal subunit protein uS5 of Rhodopirellula baltica (strain DSM 10527 / NCIMB 13988 / SH1).